A 118-amino-acid chain; its full sequence is MPRVKGGTVTRARRKKVIKLAKGYFGAKRTLYKTAKQQVMKSGQYAFRDRRQRKRDFRKLWITRINAAARNHGMSYSKLMNGLKQADIDINRKMLSEIAISDDKAFGELVEKAKAALK.

It belongs to the bacterial ribosomal protein bL20 family.

Its function is as follows. Binds directly to 23S ribosomal RNA and is necessary for the in vitro assembly process of the 50S ribosomal subunit. It is not involved in the protein synthesizing functions of that subunit. The protein is Large ribosomal subunit protein bL20 of Staphylococcus carnosus (strain TM300).